The sequence spans 125 residues: MYKLASCCLLFIGFLNPLFSLPLLDSGEVSLQLSAPHEDAPLTSEELERASLLQILPEMLLGAERGDSLRKADSSTNIFNPRGNLRKFQDFSGQDPDILLSHLLARIRKPYKKRETPDCFWKYCV.

The signal sequence occupies residues 1 to 20; the sequence is MYKLASCCLLFIGFLNPLFS. The propeptide occupies 21-111; sequence LPLLDSGEVS…HLLARIRKPY (91 aa). The cysteines at positions 119 and 124 are disulfide-linked.

It belongs to the urotensin-2 family.

The protein localises to the secreted. In terms of biological role, highly potent vasoconstrictor. The protein is Urotensin-2 (UTS2) of Macaca mulatta (Rhesus macaque).